A 109-amino-acid polypeptide reads, in one-letter code: uncharacterized protein (109 aa).

It belongs to the archaeal ATPase family.

This is an uncharacterized protein from Methanocaldococcus jannaschii (strain ATCC 43067 / DSM 2661 / JAL-1 / JCM 10045 / NBRC 100440) (Methanococcus jannaschii).